An 83-amino-acid chain; its full sequence is Putative regulatory protein FMG_0656 (83 aa).

It belongs to the RemA family.

In Finegoldia magna (strain ATCC 29328 / DSM 20472 / WAL 2508) (Peptostreptococcus magnus), this protein is Putative regulatory protein FMG_0656.